The chain runs to 1178 residues: MFELNNFDALQIGLASPEKIREWSRGEVKKPETINYRTLKPERDGLFCERIFGPMKDWECHCGKYKRIRYKGIVCDRCGVEVTKAKVRRERMGHIELAAPVSHIWYFKGIPSRMGLILDMSPRALEKVLYFASYVVLDPKETPLLKKQLLNEKEYRESIDKYGDDSFVAAMGAEAVKTLLDEIDLEQSSIELKEELKTSTGQKKIRIIRRLEVVESFRKSGNRPDWMVIDVIPVIPPDLRPMVQLDGGRFATSDLNDLYRRVINRNNRLKKLLDLGAPDIIVRNEKRMLQEAVDALIDNGRRGRPVTGPGNRPLKSLSDMLKGKQGRFRQNLLGKRVDYSGRSVIVVGPELKMYQCGLPKEMALELFKPFVMKKLVQNGLAHNIKSAKRMVERVQPQVWDVLEEVISDHPVLLNRAPTLHRLGIQAFQPVLVEGRAIKLHPLVCTAYNADFDGDQMAVHVPLSVEAQAEARFLMLAAHNILKPSDGKPVSVPTQDMVLGSYYLTMDKDGVKGEGKVFSCPEEVLMAYQCKAVDIHAKIKVRLKKVIDGETIEGIIETTPGKIIFNESIPQDLGYIDRTIPENKLKLEVDFLVSKKTLGGIITKCYMKHGATKTSIMLDKIKAKGYHYSTIGAITISTSDMVVPESKRELLENTEKQVEKIQKMYRRGFISEEERYEKVIDLWTKTTEDVANALMESLDSFNPIYMMADSGARGSKSQIKQLAGMRGLMANPSGKILELPIKASFREGLDVLEYFISTHGARKGNADTALKTADSGYLTRRLVDVSQDVIVRQEDCGTEEGYEVSEIKEGNEVIEPLVERLSGRYPSEDIIHPTTGEVIVKRNTYMDEDIAQKVSDAGIKKVKIRSVFTCKSKHGVCARCYGMNMGTSQKIHIGEAVGIVAAQSIGEPGTQLTMRTFHTGGVAGADITQGLPRVEELFEARKPKGLAIVSEVSGTVKMEETKKKRTIIVVTDDGEEVSYDIPFGSRIKVKNGDIISAGDEITEGSINPHDILRIKGVDGVKNYLLSEVQKVYRLQGVDINDKHLEVVIRQMTRKIKIEDSGDTELLPGTMIDVFDFEEANREILEKGGEPAVGRIALLGITKAALATDSFLSAASFQETTRVLTDAAIKGKIDPLLGLKENVIIGKLIPAGTGMTRYRSIQINTDDENIEEDSMDSMEV.

4 residues coordinate Zn(2+): Cys-60, Cys-62, Cys-75, and Cys-78. Asp-450, Asp-452, and Asp-454 together coordinate Mg(2+). Zn(2+) is bound by residues Cys-795, Cys-869, Cys-876, and Cys-879.

The protein belongs to the RNA polymerase beta' chain family. As to quaternary structure, the RNAP catalytic core consists of 2 alpha, 1 beta, 1 beta' and 1 omega subunit. When a sigma factor is associated with the core the holoenzyme is formed, which can initiate transcription. Mg(2+) serves as cofactor. It depends on Zn(2+) as a cofactor.

It carries out the reaction RNA(n) + a ribonucleoside 5'-triphosphate = RNA(n+1) + diphosphate. In terms of biological role, DNA-dependent RNA polymerase catalyzes the transcription of DNA into RNA using the four ribonucleoside triphosphates as substrates. The polypeptide is DNA-directed RNA polymerase subunit beta' (Clostridium botulinum (strain Langeland / NCTC 10281 / Type F)).